The primary structure comprises 151 residues: Ribosome maturation factor RimP (151 aa).

It belongs to the RimP family.

The protein localises to the cytoplasm. Its function is as follows. Required for maturation of 30S ribosomal subunits. In Endomicrobium trichonymphae, this protein is Ribosome maturation factor RimP.